Consider the following 867-residue polypeptide: Probable potassium transporter 15 (867 aa).

The segment covering 1–13 (MAASSSSSASASA) has biased composition (low complexity). The interval 1–88 (MAASSSSSAS…EGEGEDGEKQ (88 aa)) is disordered. Topologically, residues 1 to 124 (MAASSSSSAS…DSEEFDFGRT (124 aa)) are cytoplasmic. The segment covering 32 to 44 (TEEDDEGEEDGDT) has biased composition (acidic residues). The segment covering 45–54 (VEAAAAAVGA) has biased composition (low complexity). Over residues 63-84 (SEEEEDEEDGGGGGEGEGEGED) the composition is skewed to acidic residues. The helical transmembrane segment at 125 to 145 (MFLALQTLAVVFGDIGISPLY) threads the bilayer. The Extracellular portion of the chain corresponds to 146 to 167 (TFDVMFSKYPILGEEDVLGALS). Residues 168-188 (LVLYTLISMPLVKYVLVVLWA) traverse the membrane as a helical segment. Topologically, residues 189–252 (NDDGEGGIFA…KLESSLLLKK (64 aa)) are cytoplasmic. Residues 253 to 273 (LLLGLVLFGTAMFISNGVITP) form a helical membrane-spanning segment. Over 274–285 (AMSVLSAVSGLK) the chain is Extracellular. A helical transmembrane segment spans residues 286–306 (VGIPNASQGLVVMISVVLLVI). Residues 307-317 (LYSVQRYATSK) are Cytoplasmic-facing. A helical membrane pass occupies residues 318 to 338 (MGFALGPSLLIWFCCLGGIGI). The Extracellular segment spans residues 339 to 365 (YNLSTYGPAAFKAFNPLYIIYYFGRNP). An N-linked (GlcNAc...) asparagine glycan is attached at N340. The chain crosses the membrane as a helical span at residues 366-386 (FQAWLSLAGCLLCATGSEAIF). Residues 387–400 (ANLSYFPVRYVQSM) lie on the Cytoplasmic side of the membrane. The helical transmembrane segment at 401–421 (FALLVLPCLVLAYLGQGAFLI) threads the bilayer. At 422-433 (ANQNSSEQIFFS) the chain is on the extracellular side. N-linked (GlcNAc...) asparagine glycosylation is present at N425. A helical transmembrane segment spans residues 434–454 (SIPSGVFWPVFLIANLAALIA). Topologically, residues 455–490 (SRTMTTAIFQCLKQSIALGCFPRLKIIHTSRKFMAK) are cytoplasmic. Residues 491-511 (IYIPVVNWFLLFSCLGFILLF) form a helical membrane-spanning segment. Over 512–522 (RSIYDVGNAYA) the chain is Extracellular. The helical transmembrane segment at 523-543 (IAELGVMIMATVYVTIIMLLI) threads the bilayer. Residues 544 to 545 (WE) are Cytoplasmic-facing. The helical transmembrane segment at 546 to 566 (TSIVKVLSFVITFLSLELVFF) threads the bilayer. At 567-572 (SSSLSS) the chain is on the extracellular side. The helical transmembrane segment at 573-593 (VGDGGWALIIFASGILMVMFI) threads the bilayer. Residues 594–867 (WNYGSKLKYD…VMQVRLTSYV (274 aa)) are Cytoplasmic-facing.

Belongs to the HAK/KUP transporter (TC 2.A.72.3) family.

The protein resides in the membrane. High-affinity potassium transporter. This is Probable potassium transporter 15 (HAK15) from Oryza sativa subsp. japonica (Rice).